Reading from the N-terminus, the 198-residue chain is Rac-like GTP-binding protein ARAC3 (198 aa).

GTP contacts are provided by residues 13 to 21 (GDGAVGKTC), 31 to 38 (FPTDYVPT), 60 to 64 (DTAGQ), and 118 to 121 (TKLD). Residues 35 to 43 (YVPTVFDNF) carry the Effector region motif. Residue C158 is the site of S-palmitoyl cysteine attachment. At C195 the chain carries Cysteine methyl ester. The S-geranylgeranyl cysteine moiety is linked to residue C195. Positions 196–198 (SIL) are cleaved as a propeptide — removed in mature form.

The protein belongs to the small GTPase superfamily. Rho family. Interacts with Rho GDP-dissociation inhibitor 1 and ICR1. Binds to SPK1 when in the inactive GDP-bound form. In terms of tissue distribution, ubiquitous. Preferentially expressed at the tip of root hairs.

The protein localises to the cytoplasm. It localises to the cell membrane. Its function is as follows. Inactive GDP-bound Rho GTPases reside in the cytosol, are found in a complex with Rho GDP-dissociation inhibitors (Rho GDIs), and are released from the GDI protein in order to translocate to membranes upon activation. Involved in cell polarity control during the actin-dependent tip growth of root hairs, thus regulating root hair length and root hair initiation. Contributes, in a SPK1-dependent manner, to the prevention of cortical microtubules organization into parallel arrays oriented perpendicular to the axis of cell elongation to limit anisotropic cell growth during petal development. SPK1-dependent activation is required for auxin-mediated inhibition of PIN2 internalization during gravitropic responses. This chain is Rac-like GTP-binding protein ARAC3, found in Arabidopsis thaliana (Mouse-ear cress).